We begin with the raw amino-acid sequence, 108 residues long: Parvalbumin beta (108 aa).

2 consecutive EF-hand domains span residues 38 to 73 and 77 to 108; these read KPTD…FCSS and LSNA…LVRS. Residues aspartate 51, aspartate 53, serine 55, tyrosine 57, glutamate 59, glutamate 62, aspartate 90, aspartate 92, aspartate 94, lysine 96, and glutamate 101 each coordinate Ca(2+).

It belongs to the parvalbumin family.

In muscle, parvalbumin is thought to be involved in relaxation after contraction. It binds two calcium ions. In Amphiuma means (Salamander), this protein is Parvalbumin beta.